The chain runs to 571 residues: Septation ring formation regulator EzrA (571 aa).

The Extracellular segment spans residues 1-3 (MYY). Residues 4 to 22 (MLIGFIIVVIAVISAGYIL) form a helical membrane-spanning segment. The Cytoplasmic portion of the chain corresponds to 23-571 (KRKHYQRINE…ESKVSVDDIE (549 aa)). Coiled-coil stretches lie at residues 170-215 (EAKL…QMER), 248-299 (LAQM…TLEH), 326-374 (DALA…ASGE), 400-437 (NFAE…ERER), and 478-529 (RIAE…ENHF).

The protein belongs to the EzrA family.

The protein resides in the cell membrane. Functionally, negative regulator of FtsZ ring formation; modulates the frequency and position of FtsZ ring formation. Inhibits FtsZ ring formation at polar sites. Interacts either with FtsZ or with one of its binding partners to promote depolymerization. This Listeria innocua serovar 6a (strain ATCC BAA-680 / CLIP 11262) protein is Septation ring formation regulator EzrA.